A 439-amino-acid chain; its full sequence is MLSKLASLQTIAALRRGVHTSVASATSVATKKTEQGPPSSEYIFERESKYGAHNYHPLPVALERGKGIYMWDVEGRQYFDFLSAYGAVSQGHCHPKIIDAMKSQVDKLTLTSRAFYNNVLGEYEEYITKLFNYNKVLPMNTGVEAGETACKLARRWGYTVKGIQKYKAKIVFADGNFWGRTLSAISSSTDPTSYDGFGPFMPGFETIPYNDLPALERALQDPNVAAFMVEPIQGEAGVIVPDPGYLTGVRELCTRHQVLFIADEIQTGLARTGRWLAVDHENVRPDMVLLGKALSGGLYPVSAVLCDDEIMLTIKPGEHGSTYGGNPLGCRIAIAALEVLEEENLAENADKMGAILRKELMKLPSDVVTSVRGKGLLNAIVIRETKDCDAWKVCLRLRDNGLLAKPTHGDIIRLAPPLVIKEDEIRESVEIINKTILSF.

The N-terminal 25 residues, 1–25, are a transit peptide targeting the mitochondrion; sequence MLSKLASLQTIAALRRGVHTSVASA. N6-acetyllysine occurs at positions 49 and 66. N6-succinyllysine is present on Lys-102. At Lys-107 the chain carries N6-acetyllysine; alternate. Lys-107 carries the post-translational modification N6-succinyllysine; alternate. At Lys-292 the chain carries N6-(pyridoxal phosphate)lysine. Position 362 is an N6-acetyllysine; alternate (Lys-362). An N6-succinyllysine; alternate modification is found at Lys-362. Lys-386 and Lys-392 each carry N6-acetyllysine. Lys-405 carries the N6-acetyllysine; alternate modification. At Lys-405 the chain carries N6-succinyllysine; alternate. Position 421 is an N6-acetyllysine (Lys-421).

Belongs to the class-III pyridoxal-phosphate-dependent aminotransferase family. Homohexamer. The cofactor is pyridoxal 5'-phosphate.

The protein resides in the mitochondrion matrix. The catalysed reaction is L-ornithine + 2-oxoglutarate = L-glutamate 5-semialdehyde + L-glutamate. Its pathway is amino-acid biosynthesis; L-proline biosynthesis; L-glutamate 5-semialdehyde from L-ornithine: step 1/1. Functionally, catalyzes the reversible interconversion of L-ornithine and 2-oxoglutarate to L-glutamate semialdehyde and L-glutamate. The sequence is that of Ornithine aminotransferase, mitochondrial (Oat) from Mus musculus (Mouse).